We begin with the raw amino-acid sequence, 290 residues long: OTU domain-containing protein 6A (290 aa).

Residues 27-117 (QTLKASVPKN…RRHQERMPAA (91 aa)) are disordered. Residues 49 to 68 (SRLEAEMEQRHKQELEKFGE) show a composition bias toward basic and acidic residues. The span at 95-108 (KAQKRRDRRAHQER) shows a compositional bias: basic residues. An OTU domain is found at 142-276 (LEMKTIPADG…GEHYNSVKPI (135 aa)). The interval 147–153 (IPADGHC) is cys-loop. D150 is an active-site residue. The Nucleophile role is filled by C153. Residues 211–221 (IVHNASWGGQL) form a variable-loop region. A his-loop region spans residues 259-269 (YLHYACDFGEH). H269 is a catalytic residue.

The catalysed reaction is Thiol-dependent hydrolysis of ester, thioester, amide, peptide and isopeptide bonds formed by the C-terminal Gly of ubiquitin (a 76-residue protein attached to proteins as an intracellular targeting signal).. Functionally, deubiquitinating enzyme that hydrolyzes 'Lys-27'-, 'Lys-29'- and 'Lys-33'-linked polyubiquitin chains. Also able to hydrolyze 'Lys-11'-linked ubiquitin chains. In Mus musculus (Mouse), this protein is OTU domain-containing protein 6A (Otud6a).